The sequence spans 282 residues: Sirohydrochlorin cobaltochelatase CbiKC (282 aa).

The active-site Proton acceptor is His166. Co(2+) contacts are provided by His166 and His228.

The protein belongs to the CbiK family.

It is found in the cytoplasm. The enzyme catalyses Co-sirohydrochlorin + 2 H(+) = sirohydrochlorin + Co(2+). It catalyses the reaction siroheme + 2 H(+) = sirohydrochlorin + Fe(2+). The protein operates within cofactor biosynthesis; adenosylcobalamin biosynthesis; cob(II)yrinate a,c-diamide from sirohydrochlorin (anaerobic route): step 1/10. It participates in porphyrin-containing compound metabolism; siroheme biosynthesis; siroheme from sirohydrochlorin: step 1/1. Its function is as follows. Catalyzes the insertion of Co(2+) into sirohydrochlorin as part of the anaerobic pathway to cobalamin biosynthesis. To a lesser extent, is also able to insert Fe(2+) into sirohydrochlorin, yielding siroheme. The sequence is that of Sirohydrochlorin cobaltochelatase CbiKC (cbiKc) from Nitratidesulfovibrio vulgaris (strain ATCC 29579 / DSM 644 / CCUG 34227 / NCIMB 8303 / VKM B-1760 / Hildenborough) (Desulfovibrio vulgaris).